The sequence spans 660 residues: DNA topoisomerase I, plasmid (660 aa).

In terms of domain architecture, Toprim spans 1-110; it reads MKLMIIESPG…LRVTFNEITA (110 aa). The Mg(2+) site is built by Glu7 and Asp79. Residues 124 to 550 enclose the Topo IA-type catalytic domain; the sequence is DVKRVAAQEA…KVHDQLNMEL (427 aa). Residues 158–163 are interaction with DNA; it reads SAGRVQ. Residue Tyr287 is the O-(5'-phospho-DNA)-tyrosine intermediate of the active site. C4-type zinc fingers lie at residues 563-589 and 613-643; these read CQEC…YPDC and CVKC…KEGC.

This sequence belongs to the type IA topoisomerase family. Monomer. It depends on Mg(2+) as a cofactor.

The enzyme catalyses ATP-independent breakage of single-stranded DNA, followed by passage and rejoining.. Releases the supercoiling and torsional tension of DNA, which is introduced during the DNA replication and transcription, by transiently cleaving and rejoining one strand of the DNA duplex. Introduces a single-strand break via transesterification at a target site in duplex DNA. The scissile phosphodiester is attacked by the catalytic tyrosine of the enzyme, resulting in the formation of a DNA-(5'-phosphotyrosyl)-enzyme intermediate and the expulsion of a 3'-OH DNA strand. The free DNA strand then undergoes passage around the unbroken strand, thus removing DNA supercoils. Finally, in the religation step, the DNA 3'-OH attacks the covalent intermediate to expel the active-site tyrosine and restore the DNA phosphodiester backbone. This chain is DNA topoisomerase I, plasmid, found in Xylella fastidiosa (strain 9a5c).